A 401-amino-acid chain; its full sequence is Probable inactive purple acid phosphatase 14 (401 aa).

An N-terminal signal peptide occupies residues 1–30 (MEETRRRFVISSVLSVSLIYLCLSTCHVSA). An N-linked (GlcNAc...) asparagine glycan is attached at asparagine 79. Asparagine 197 serves as a coordination point for substrate. Position 197 (asparagine 197) interacts with Zn(2+). N-linked (GlcNAc...) asparagine glycosylation occurs at asparagine 246. Residue histidine 256 participates in Zn(2+) binding. An N-linked (GlcNAc...) asparagine glycan is attached at asparagine 266. Histidine 305 contributes to the Zn(2+) binding site. 305–307 (HDH) contributes to the substrate binding site. Residue histidine 307 coordinates Fe cation. Asparagine 371 and asparagine 384 each carry an N-linked (GlcNAc...) asparagine glycan.

The protein belongs to the metallophosphoesterase superfamily. Purple acid phosphatase family. In terms of assembly, homodimer. The cofactor is Fe cation. It depends on Zn(2+) as a cofactor. Specifically expressed in flowers.

Its subcellular location is the secreted. The sequence is that of Probable inactive purple acid phosphatase 14 (PAP14) from Arabidopsis thaliana (Mouse-ear cress).